The following is a 533-amino-acid chain: Calcium/calmodulin-dependent protein kinase type II (533 aa).

Residues 18–26 (LGKGAFSVV) and lysine 41 contribute to the ATP site. The active-site Proton acceptor is aspartate 134. Threonine 284 carries the post-translational modification Phosphothreonine; by autocatalysis. Composition is skewed to polar residues over residues 316 to 345 (TSDS…QPTS) and 377 to 391 (PPST…SQTI). 2 disordered regions span residues 316-347 (TSDS…TSPA) and 369-400 (LLNK…EKAQ).

Belongs to the protein kinase superfamily. CAMK Ser/Thr protein kinase family. CaMK subfamily. As to quaternary structure, dodecamer. Subunits are tightly packed around a central ring-shaped scaffold with extensive contacts between the regulatory segment of one kinase and the catalytic domain of another enabling cooperative activation of a subunit by the adjacent molecule. Interacts with and phosphorylates daf-16; the interaction promotes daf-16 nuclear localization. Interacts with egl-2 and tir-1. Interacts with nsy-1. It depends on Mg(2+) as a cofactor.

It is found in the cytoplasm. Its subcellular location is the cell projection. The protein resides in the axon. The protein localises to the perikaryon. The catalysed reaction is L-seryl-[protein] + ATP = O-phospho-L-seryl-[protein] + ADP + H(+). The enzyme catalyses L-threonyl-[protein] + ATP = O-phospho-L-threonyl-[protein] + ADP + H(+). Its activity is regulated as follows. Ca(2+)/calmodulin binding removes an autoinhibitory regulatory segment located C-terminal to the kinase domain. This releases the catalytic activity of the enzyme and makes accessible a regulatory residue Thr-284. Phosphorylation of Thr-284 by another kinase domain within the oligomeric holoenzyme keeps CaMKII active in the absence of Ca(2+)/calmodulin by preventing the rebinding of the regulatory segment to the kinase domain and by increasing the affinity of calmodulin for the enzyme. Can respond to high-frequency Ca(2+) pulses to become Ca(2+) independent. In terms of biological role, role in locomotion and neuronal cell fate specification. Required for the regulation of synaptic density, egg laying, defecation, and meiotic maturation. Required for viability under chronic osmotic stress in which it acts downstream of osr-1. Regulates the synaptic trafficking of glr-1. Bidirectional modulator of neurotransmitter release with negative modulatory effects mainly mediated via slo-1 activation. May suppress the functional response to an internal pacemaker, perhaps by modulating the activity of the IP3 receptor. In Caenorhabditis briggsae, this protein is Calcium/calmodulin-dependent protein kinase type II.